Reading from the N-terminus, the 311-residue chain is Elongation factor Ts (311 aa).

Residues 81 to 84 form an involved in Mg(2+) ion dislocation from EF-Tu region; the sequence is TDFV.

Belongs to the EF-Ts family.

It is found in the cytoplasm. Its function is as follows. Associates with the EF-Tu.GDP complex and induces the exchange of GDP to GTP. It remains bound to the aminoacyl-tRNA.EF-Tu.GTP complex up to the GTP hydrolysis stage on the ribosome. In Trichlorobacter lovleyi (strain ATCC BAA-1151 / DSM 17278 / SZ) (Geobacter lovleyi), this protein is Elongation factor Ts.